A 282-amino-acid chain; its full sequence is UPF0294 protein VIBHAR_03217 (282 aa).

The protein belongs to the UPF0294 family.

It is found in the cytoplasm. The chain is UPF0294 protein VIBHAR_03217 from Vibrio campbellii (strain ATCC BAA-1116).